The following is a 447-amino-acid chain: UDP-N-acetylmuramate--L-alanine ligase (447 aa).

Gly-108–Ser-114 contributes to the ATP binding site.

Belongs to the MurCDEF family.

The protein localises to the cytoplasm. It catalyses the reaction UDP-N-acetyl-alpha-D-muramate + L-alanine + ATP = UDP-N-acetyl-alpha-D-muramoyl-L-alanine + ADP + phosphate + H(+). Its pathway is cell wall biogenesis; peptidoglycan biosynthesis. Its function is as follows. Cell wall formation. The protein is UDP-N-acetylmuramate--L-alanine ligase of Listeria monocytogenes serovar 1/2a (strain ATCC BAA-679 / EGD-e).